The following is a 294-amino-acid chain: ATP synthase gamma chain (294 aa).

This sequence belongs to the ATPase gamma chain family. F-type ATPases have 2 components, CF(1) - the catalytic core - and CF(0) - the membrane proton channel. CF(1) has five subunits: alpha(3), beta(3), gamma(1), delta(1), epsilon(1). CF(0) has three main subunits: a, b and c.

It localises to the cell inner membrane. Functionally, produces ATP from ADP in the presence of a proton gradient across the membrane. The gamma chain is believed to be important in regulating ATPase activity and the flow of protons through the CF(0) complex. In Campylobacter jejuni subsp. jejuni serotype O:23/36 (strain 81-176), this protein is ATP synthase gamma chain.